The sequence spans 882 residues: Alanine--tRNA ligase (882 aa).

Zn(2+) contacts are provided by H570, H574, C672, and H676.

Belongs to the class-II aminoacyl-tRNA synthetase family. Requires Zn(2+) as cofactor.

The protein localises to the cytoplasm. The catalysed reaction is tRNA(Ala) + L-alanine + ATP = L-alanyl-tRNA(Ala) + AMP + diphosphate. Its function is as follows. Catalyzes the attachment of alanine to tRNA(Ala) in a two-step reaction: alanine is first activated by ATP to form Ala-AMP and then transferred to the acceptor end of tRNA(Ala). Also edits incorrectly charged Ser-tRNA(Ala) and Gly-tRNA(Ala) via its editing domain. The sequence is that of Alanine--tRNA ligase from Xanthomonas axonopodis pv. citri (strain 306).